We begin with the raw amino-acid sequence, 87 residues long: Signal recognition particle 19 kDa protein (87 aa).

It belongs to the SRP19 family. Part of the signal recognition particle protein translocation system, which is composed of SRP and FtsY. Archaeal SRP consists of a 7S RNA molecule of 300 nucleotides and two protein subunits: SRP54 and SRP19.

The protein localises to the cytoplasm. Functionally, involved in targeting and insertion of nascent membrane proteins into the cytoplasmic membrane. Binds directly to 7S RNA and mediates binding of the 54 kDa subunit of the SRP. This Methanocaldococcus jannaschii (strain ATCC 43067 / DSM 2661 / JAL-1 / JCM 10045 / NBRC 100440) (Methanococcus jannaschii) protein is Signal recognition particle 19 kDa protein.